The sequence spans 362 residues: Phosphoserine aminotransferase (362 aa).

2 residues coordinate L-glutamate: S9 and R42. Residues 76–77, W102, T153, D174, and Q197 each bind pyridoxal 5'-phosphate; that span reads GR. At K198 the chain carries N6-(pyridoxal phosphate)lysine. Pyridoxal 5'-phosphate is bound at residue 239–240; the sequence is NT.

It belongs to the class-V pyridoxal-phosphate-dependent aminotransferase family. SerC subfamily. In terms of assembly, homodimer. It depends on pyridoxal 5'-phosphate as a cofactor.

The protein resides in the cytoplasm. The enzyme catalyses O-phospho-L-serine + 2-oxoglutarate = 3-phosphooxypyruvate + L-glutamate. The catalysed reaction is 4-(phosphooxy)-L-threonine + 2-oxoglutarate = (R)-3-hydroxy-2-oxo-4-phosphooxybutanoate + L-glutamate. It functions in the pathway amino-acid biosynthesis; L-serine biosynthesis; L-serine from 3-phospho-D-glycerate: step 2/3. Its pathway is cofactor biosynthesis; pyridoxine 5'-phosphate biosynthesis; pyridoxine 5'-phosphate from D-erythrose 4-phosphate: step 3/5. Functionally, catalyzes the reversible conversion of 3-phosphohydroxypyruvate to phosphoserine and of 3-hydroxy-2-oxo-4-phosphonooxybutanoate to phosphohydroxythreonine. Is involved in both pyridoxine and serine biosynthesis. The protein is Phosphoserine aminotransferase (serC) of Escherichia coli (strain K12).